The following is a 176-amino-acid chain: NAD(P)H-quinone oxidoreductase subunit 6, chloroplastic (176 aa).

Transmembrane regions (helical) follow at residues 10–30 (FLLV…VLFT), 33–53 (IFSA…YILA), 63–83 (LLIY…FMSG), 105–125 (ISLF…GIIW), and 152–172 (FFLP…GAIA).

This sequence belongs to the complex I subunit 6 family. NDH is composed of at least 16 different subunits, 5 of which are encoded in the nucleus.

It is found in the plastid. The protein resides in the chloroplast thylakoid membrane. The enzyme catalyses a plastoquinone + NADH + (n+1) H(+)(in) = a plastoquinol + NAD(+) + n H(+)(out). It catalyses the reaction a plastoquinone + NADPH + (n+1) H(+)(in) = a plastoquinol + NADP(+) + n H(+)(out). Its function is as follows. NDH shuttles electrons from NAD(P)H:plastoquinone, via FMN and iron-sulfur (Fe-S) centers, to quinones in the photosynthetic chain and possibly in a chloroplast respiratory chain. The immediate electron acceptor for the enzyme in this species is believed to be plastoquinone. Couples the redox reaction to proton translocation, and thus conserves the redox energy in a proton gradient. This Spinacia oleracea (Spinach) protein is NAD(P)H-quinone oxidoreductase subunit 6, chloroplastic (ndhG).